The primary structure comprises 1167 residues: ATP-dependent helicase/deoxyribonuclease subunit B (1167 aa).

The UvrD-like helicase ATP-binding domain occupies 1-359 (MSLRFLLGRS…IRQTEAYRDL (359 aa)). 8-15 (GRSGSGKT) contributes to the ATP binding site. The UvrD-like helicase C-terminal domain occupies 282–588 (VNRRHQDKAL…EFALVPPAID (307 aa)). Residues C803, C1125, C1128, and C1134 each contribute to the [4Fe-4S] cluster site.

It belongs to the helicase family. AddB/RexB type 1 subfamily. Heterodimer of AddA and AddB. Mg(2+) serves as cofactor. The cofactor is [4Fe-4S] cluster.

In terms of biological role, the heterodimer acts as both an ATP-dependent DNA helicase and an ATP-dependent, dual-direction single-stranded exonuclease. Recognizes the chi site generating a DNA molecule suitable for the initiation of homologous recombination. The AddB subunit has 5' -&gt; 3' nuclease activity but not helicase activity. This Geobacillus thermodenitrificans (strain NG80-2) protein is ATP-dependent helicase/deoxyribonuclease subunit B.